Here is a 407-residue protein sequence, read N- to C-terminus: Phosphopentomutase (407 aa).

Positions 10, 306, 311, 347, 348, and 359 each coordinate Mn(2+).

It belongs to the phosphopentomutase family. Mn(2+) is required as a cofactor.

It is found in the cytoplasm. The enzyme catalyses 2-deoxy-alpha-D-ribose 1-phosphate = 2-deoxy-D-ribose 5-phosphate. The catalysed reaction is alpha-D-ribose 1-phosphate = D-ribose 5-phosphate. It functions in the pathway carbohydrate degradation; 2-deoxy-D-ribose 1-phosphate degradation; D-glyceraldehyde 3-phosphate and acetaldehyde from 2-deoxy-alpha-D-ribose 1-phosphate: step 1/2. In terms of biological role, isomerase that catalyzes the conversion of deoxy-ribose 1-phosphate (dRib-1-P) and ribose 1-phosphate (Rib-1-P) to deoxy-ribose 5-phosphate (dRib-5-P) and ribose 5-phosphate (Rib-5-P), respectively. The chain is Phosphopentomutase from Shigella dysenteriae serotype 1 (strain Sd197).